The primary structure comprises 253 residues: 3-deoxy-manno-octulosonate cytidylyltransferase (253 aa).

Belongs to the KdsB family.

Its subcellular location is the cytoplasm. It catalyses the reaction 3-deoxy-alpha-D-manno-oct-2-ulosonate + CTP = CMP-3-deoxy-beta-D-manno-octulosonate + diphosphate. It participates in nucleotide-sugar biosynthesis; CMP-3-deoxy-D-manno-octulosonate biosynthesis; CMP-3-deoxy-D-manno-octulosonate from 3-deoxy-D-manno-octulosonate and CTP: step 1/1. It functions in the pathway bacterial outer membrane biogenesis; lipopolysaccharide biosynthesis. Functionally, activates KDO (a required 8-carbon sugar) for incorporation into bacterial lipopolysaccharide in Gram-negative bacteria. The protein is 3-deoxy-manno-octulosonate cytidylyltransferase of Neisseria meningitidis serogroup C / serotype 2a (strain ATCC 700532 / DSM 15464 / FAM18).